The chain runs to 84 residues: Small ribosomal subunit protein uS17 (84 aa).

The protein belongs to the universal ribosomal protein uS17 family. As to quaternary structure, part of the 30S ribosomal subunit.

In terms of biological role, one of the primary rRNA binding proteins, it binds specifically to the 5'-end of 16S ribosomal RNA. This chain is Small ribosomal subunit protein uS17, found in Hamiltonella defensa subsp. Acyrthosiphon pisum (strain 5AT).